The chain runs to 828 residues: Glycerol-3-phosphate acyltransferase (828 aa).

Positions C309–I314 match the HXXXXD motif motif.

This sequence belongs to the GPAT/DAPAT family.

The protein resides in the cell inner membrane. It carries out the reaction sn-glycerol 3-phosphate + an acyl-CoA = a 1-acyl-sn-glycero-3-phosphate + CoA. Its pathway is phospholipid metabolism; CDP-diacylglycerol biosynthesis; CDP-diacylglycerol from sn-glycerol 3-phosphate: step 1/3. This chain is Glycerol-3-phosphate acyltransferase, found in Pseudomonas putida (strain W619).